A 921-amino-acid polypeptide reads, in one-letter code: Inter-alpha-trypsin inhibitor heavy chain H4 (921 aa).

A signal peptide spans 1–27 (MKTLSPTGYGLLLVLPLLLAVLQSTTA). A VIT domain is found at 28 to 146 (HKNDINIYSL…KVTFELVYEE (119 aa)). Residues N80, N205, and N242 are each glycosylated (N-linked (GlcNAc...) asparagine). The region spanning 270-428 (PKNVIFVIDT…YAFLEKMALE (159 aa)) is the VWFA domain. 2 N-linked (GlcNAc...) asparagine glycosylation sites follow: N513 and N577. A disordered region spans residues 591–646 (KPEGQEQSQVAEKPVENGNRQGNTHSGHSSFQFHSVGDRTSRLTGGSSVDPVFSHR). Over residues 608 to 623 (GNRQGNTHSGHSSFQF) the composition is skewed to polar residues. Residue T712 is glycosylated (O-linked (GalNAc...) threonine). An intrachain disulfide couples C738 to C916.

This sequence belongs to the ITIH family. In terms of assembly, interacts (via C-terminus) with DNAJC1 (via SANT 2 domain). In terms of processing, appears to be both N- and O-glycosylated. Post-translationally, cleaved by plasma kallikrein to yield 55- and 25-kDa fragments. As to expression, liver specific.

Its subcellular location is the secreted. Its function is as follows. Type II acute-phase protein (APP) involved in inflammatory responses to trauma. May also play a role in liver development or regeneration. This is Inter-alpha-trypsin inhibitor heavy chain H4 (ITIH4) from Sus scrofa (Pig).